Here is a 117-residue protein sequence, read N- to C-terminus: Calcitonin receptor-stimulating peptide 2 (117 aa).

The first 25 residues, 1–25 (MGFWKFPPFLVLSILVLYQAGMFHT), serve as a signal peptide directing secretion. Positions 26-79 (APVRLPLESSFDSATLTEEEVSLLLVAMVKDYVQMKATVLEQESEDFSITAQEK) are excised as a propeptide. Cys81 and Cys86 form a disulfide bridge.

Belongs to the calcitonin family. In terms of tissue distribution, mainly expressed in the thyroid gland and CNS. Found in the nerve cells of the cerebrum, hippocampus, hypothalamus, pons/midbrain and thalamus. Also detected in the glia-like cells of pons/midbrain and in meninx of tactus opticus.

The protein localises to the secreted. The polypeptide is Calcitonin receptor-stimulating peptide 2 (CRSP2) (Sus scrofa (Pig)).